The chain runs to 193 residues: Ion-translocating oxidoreductase complex subunit A (193 aa).

The next 6 helical transmembrane spans lie at 5-25 (LLLF…FLGL), 47-67 (FVMT…LIPL), 72-92 (LRTL…EMVV), 102-122 (LLGI…VALL), 134-154 (ALYG…FAAI), and 171-191 (AIAL…SGLV).

This sequence belongs to the NqrDE/RnfAE family. In terms of assembly, the complex is composed of six subunits: RsxA, RsxB, RsxC, RsxD, RsxE and RsxG.

The protein resides in the cell inner membrane. Part of a membrane-bound complex that couples electron transfer with translocation of ions across the membrane. Required to maintain the reduced state of SoxR. This is Ion-translocating oxidoreductase complex subunit A from Salmonella arizonae (strain ATCC BAA-731 / CDC346-86 / RSK2980).